Reading from the N-terminus, the 80-residue chain is Iota-conotoxin-like r11c (80 aa).

Positions 1 to 19 (MKLCLTFLLVLMILASVTG) are cleaved as a signal peptide. Positions 20–35 (EKSSKHTLSRAARVKN) are excised as a propeptide. Pro38 and Pro47 each carry 4-hydroxyproline; partial. Disulfide bonds link Cys41–Cys55, Cys48–Cys58, Cys54–Cys63, and Cys57–Cys72. Position 65 is a 4-hydroxyproline (Pro65). A D-leucine modification is found at Leu78. A propeptide (removed by a carboxypeptidase) is located at residue Arg80.

Post-translationally, the natural D-Leu form of the peptide is more potent than the synthetic L-Leu form. As to expression, expressed by the venom duct.

It localises to the secreted. Its function is as follows. Iota-conotoxins bind to voltage-gated sodium channels (Nav) and act as agonists by shifting the voltage-dependence of activation to more hyperpolarized levels. Causes circular motion, convulsions, copious urination, rigid paralysis and death upon intracranial injection into mice. Causes unbalanced swimming, swimming in diagonal and vertical motion and death, when injected intraperitoneally into goldfish. L-Leu and D-Leu forms are active on both nerve and muscle. This chain is Iota-conotoxin-like r11c, found in Conus radiatus (Rayed cone).